The primary structure comprises 343 residues: CRISPR-associated endonuclease Cas1 1 (343 aa).

Glutamate 166, histidine 234, and glutamate 249 together coordinate Mn(2+).

Belongs to the CRISPR-associated endonuclease Cas1 family. In terms of assembly, homodimer, forms a heterotetramer with a Cas2 homodimer. Mg(2+) is required as a cofactor. The cofactor is Mn(2+).

CRISPR (clustered regularly interspaced short palindromic repeat), is an adaptive immune system that provides protection against mobile genetic elements (viruses, transposable elements and conjugative plasmids). CRISPR clusters contain spacers, sequences complementary to antecedent mobile elements, and target invading nucleic acids. CRISPR clusters are transcribed and processed into CRISPR RNA (crRNA). Acts as a dsDNA endonuclease. Involved in the integration of spacer DNA into the CRISPR cassette. In Chlorobaculum tepidum (strain ATCC 49652 / DSM 12025 / NBRC 103806 / TLS) (Chlorobium tepidum), this protein is CRISPR-associated endonuclease Cas1 1.